Consider the following 159-residue polypeptide: ATP synthase subunit b' (159 aa).

A helical membrane pass occupies residues 27-47 (ATLPLMAVQFLILTVILNALL).

Belongs to the ATPase B chain family. F-type ATPases have 2 components, F(1) - the catalytic core - and F(0) - the membrane proton channel. F(1) has five subunits: alpha(3), beta(3), gamma(1), delta(1), epsilon(1). F(0) has four main subunits: a(1), b(1), b'(1) and c(10-14). The alpha and beta chains form an alternating ring which encloses part of the gamma chain. F(1) is attached to F(0) by a central stalk formed by the gamma and epsilon chains, while a peripheral stalk is formed by the delta, b and b' chains.

Its subcellular location is the cellular thylakoid membrane. Its function is as follows. F(1)F(0) ATP synthase produces ATP from ADP in the presence of a proton or sodium gradient. F-type ATPases consist of two structural domains, F(1) containing the extramembraneous catalytic core and F(0) containing the membrane proton channel, linked together by a central stalk and a peripheral stalk. During catalysis, ATP synthesis in the catalytic domain of F(1) is coupled via a rotary mechanism of the central stalk subunits to proton translocation. In terms of biological role, component of the F(0) channel, it forms part of the peripheral stalk, linking F(1) to F(0). The b'-subunit is a diverged and duplicated form of b found in plants and photosynthetic bacteria. The chain is ATP synthase subunit b' from Synechococcus sp. (strain PCC 6716).